Reading from the N-terminus, the 147-residue chain is Probable cytidine deaminase (147 aa).

The CMP/dCMP-type deaminase domain occupies 4–130; sequence EELEKCIDAA…KLLPGLFSQE (127 aa). 45–51 contributes to the substrate binding site; the sequence is NVENSSY. Zn(2+) is bound at residue Cys-56. The active-site Proton donor is the Glu-58. Zn(2+) is bound by residues Cys-90 and Cys-93.

It belongs to the cytidine and deoxycytidylate deaminase family. It depends on Zn(2+) as a cofactor.

It catalyses the reaction cytidine + H2O + H(+) = uridine + NH4(+). It carries out the reaction 2'-deoxycytidine + H2O + H(+) = 2'-deoxyuridine + NH4(+). In terms of biological role, this enzyme scavenges exogenous and endogenous cytidine and 2'-deoxycytidine for UMP synthesis. The protein is Probable cytidine deaminase (cda) of Dictyostelium discoideum (Social amoeba).